A 111-amino-acid chain; its full sequence is uncharacterized protein (111 aa).

This is an uncharacterized protein from Saccharomyces cerevisiae (strain ATCC 204508 / S288c) (Baker's yeast).